Reading from the N-terminus, the 147-residue chain is Large ribosomal subunit protein uL13 (147 aa).

This sequence belongs to the universal ribosomal protein uL13 family. Part of the 50S ribosomal subunit.

Functionally, this protein is one of the early assembly proteins of the 50S ribosomal subunit, although it is not seen to bind rRNA by itself. It is important during the early stages of 50S assembly. The chain is Large ribosomal subunit protein uL13 from Pediococcus pentosaceus (strain ATCC 25745 / CCUG 21536 / LMG 10740 / 183-1w).